The chain runs to 247 residues: 2,5-diamino-6-ribosylamino-4(3H)-pyrimidinone 5'-phosphate reductase (247 aa).

NADP(+) contacts are provided by residues T75, D79, G165, and 187 to 191; that span reads GASII.

The protein belongs to the HTP reductase family. As to quaternary structure, homodimer.

It carries out the reaction 2,5-diamino-6-(1-D-ribitylamino)pyrimidin-4(3H)-one 5'-phosphate + NADP(+) = 2,5-diamino-6-(1-D-ribosylamino)pyrimidin-4(3H)-one 5'-phosphate + NADPH + H(+). The catalysed reaction is 2,5-diamino-6-(1-D-ribitylamino)pyrimidin-4(3H)-one 5'-phosphate + NAD(+) = 2,5-diamino-6-(1-D-ribosylamino)pyrimidin-4(3H)-one 5'-phosphate + NADH + H(+). Its pathway is cofactor biosynthesis; riboflavin biosynthesis. Catalyzes an early step in riboflavin biosynthesis, the NADPH-dependent reduction of the ribose side chain of 2,5-diamino-6-ribosylamino-4(3H)-pyrimidinone 5'-phosphate, yielding 2,5-diamino-6-ribitylamino-4(3H)-pyrimidinone 5'-phosphate. This Debaryomyces hansenii (strain ATCC 36239 / CBS 767 / BCRC 21394 / JCM 1990 / NBRC 0083 / IGC 2968) (Yeast) protein is 2,5-diamino-6-ribosylamino-4(3H)-pyrimidinone 5'-phosphate reductase (RIB7).